We begin with the raw amino-acid sequence, 100 residues long: ATP-dependent Clp protease adapter protein ClpS (100 aa).

Belongs to the ClpS family. Binds to the N-terminal domain of the chaperone ClpA.

In terms of biological role, involved in the modulation of the specificity of the ClpAP-mediated ATP-dependent protein degradation. This chain is ATP-dependent Clp protease adapter protein ClpS, found in Nitratidesulfovibrio vulgaris (strain DSM 19637 / Miyazaki F) (Desulfovibrio vulgaris).